The following is a 149-amino-acid chain: Nucleoside diphosphate kinase 1 (149 aa).

The ATP site is built by K10, F58, R86, T92, R103, and N113. Residue H116 is the Pros-phosphohistidine intermediate of the active site.

Belongs to the NDK family. Mg(2+) serves as cofactor.

It catalyses the reaction a 2'-deoxyribonucleoside 5'-diphosphate + ATP = a 2'-deoxyribonucleoside 5'-triphosphate + ADP. The catalysed reaction is a ribonucleoside 5'-diphosphate + ATP = a ribonucleoside 5'-triphosphate + ADP. Functionally, major role in the synthesis of nucleoside triphosphates other than ATP. The ATP gamma phosphate is transferred to the NDP beta phosphate via a ping-pong mechanism, using a phosphorylated active-site intermediate. This NDK is microtubule-associated. This is Nucleoside diphosphate kinase 1 (NDPK1) from Pisum sativum (Garden pea).